A 452-amino-acid polypeptide reads, in one-letter code: Keratin, type II cytoskeletal 80 (452 aa).

The tract at residues 1 to 82 (MAYRSCVVGF…DPAVQQQKNQ (82 aa)) is head. The residue at position 45 (S45) is a Phosphoserine. The tract at residues 82 to 118 (QEKEEMKVLNDKFASLIGKVQALEQRNQLLETRWGFL) is coil 1A. Positions 83–394 (EKEEMKVLND…KLMEGEESRM (312 aa)) constitute an IF rod domain. The linker 1 stretch occupies residues 119–135 (QGQGSATFDLSHHYETF). The segment at 136 to 227 (QGRLQEELRK…TVYEQELKDL (92 aa)) is coil 1B. The segment at 228–251 (TAQVKDVSVTVGLDSRCHIDLSGI) is linker 12. Positions 252-390 (VEEVKAQYDA…ATYHKLMEGE (139 aa)) are coil 2. The tract at residues 391-452 (ESRMDLPSTT…YLSQESEASE (62 aa)) is tail. 2 stretches are compositionally biased toward polar residues: residues 411 to 421 (TTASKSGLSKT) and 443 to 452 (YLSQESEASE). The interval 411–452 (TTASKSGLSKTPSRKKKNRGGPVIKITEMSEKYLSQESEASE) is disordered.

Belongs to the intermediate filament family. As to quaternary structure, heterotetramer of two type I and two type II keratins.

The protein is Keratin, type II cytoskeletal 80 (Krt80) of Rattus norvegicus (Rat).